The sequence spans 217 residues: Somatotropin (217 aa).

Residues 1-26 (MAAGSRTSLLLAFALLCLPWLQEGSA) form the signal peptide. A Zn(2+)-binding site is contributed by H44. The cysteines at positions 79 and 191 are disulfide-linked. A Phosphoserine modification is found at S132. Residue E200 participates in Zn(2+) binding. A disulfide bond links C208 and C215.

Belongs to the somatotropin/prolactin family.

It localises to the secreted. Plays an important role in growth control. Its major role in stimulating body growth is to stimulate the liver and other tissues to secrete IGF1. It stimulates both the differentiation and proliferation of myoblasts. It also stimulates amino acid uptake and protein synthesis in muscle and other tissues. The sequence is that of Somatotropin (GH1) from Macaca mulatta (Rhesus macaque).